The following is a 498-amino-acid chain: Probable cytosol aminopeptidase (498 aa).

2 residues coordinate Mn(2+): lysine 264 and aspartate 269. Lysine 276 is an active-site residue. Residues aspartate 287, aspartate 346, and glutamate 348 each contribute to the Mn(2+) site. Arginine 350 is an active-site residue.

It belongs to the peptidase M17 family. It depends on Mn(2+) as a cofactor.

The protein resides in the cytoplasm. The catalysed reaction is Release of an N-terminal amino acid, Xaa-|-Yaa-, in which Xaa is preferably Leu, but may be other amino acids including Pro although not Arg or Lys, and Yaa may be Pro. Amino acid amides and methyl esters are also readily hydrolyzed, but rates on arylamides are exceedingly low.. The enzyme catalyses Release of an N-terminal amino acid, preferentially leucine, but not glutamic or aspartic acids.. Functionally, presumably involved in the processing and regular turnover of intracellular proteins. Catalyzes the removal of unsubstituted N-terminal amino acids from various peptides. The sequence is that of Probable cytosol aminopeptidase from Rhizobium rhizogenes (strain K84 / ATCC BAA-868) (Agrobacterium radiobacter).